The primary structure comprises 430 residues: Adenylosuccinate synthetase (430 aa).

GTP-binding positions include 12 to 18 (GDEGKGK) and 40 to 42 (GHT). Asp-13 functions as the Proton acceptor in the catalytic mechanism. Mg(2+) is bound by residues Asp-13 and Gly-40. IMP is bound by residues 13 to 16 (DEGK), 38 to 41 (NAGH), Thr-130, Arg-144, Gln-224, Thr-239, and Arg-303. Residue His-41 is the Proton donor of the active site. 299 to 305 (ATTGRPR) is a substrate binding site. GTP-binding positions include Arg-305, 331-333 (KLD), and 413-415 (SVG).

This sequence belongs to the adenylosuccinate synthetase family. Homodimer. Mg(2+) is required as a cofactor.

The protein localises to the cytoplasm. It catalyses the reaction IMP + L-aspartate + GTP = N(6)-(1,2-dicarboxyethyl)-AMP + GDP + phosphate + 2 H(+). It participates in purine metabolism; AMP biosynthesis via de novo pathway; AMP from IMP: step 1/2. Plays an important role in the de novo pathway of purine nucleotide biosynthesis. Catalyzes the first committed step in the biosynthesis of AMP from IMP. In Trichlorobacter lovleyi (strain ATCC BAA-1151 / DSM 17278 / SZ) (Geobacter lovleyi), this protein is Adenylosuccinate synthetase.